The following is a 94-amino-acid chain: MASNLFTIFQLAGFVAIVFIVNLHSVSAESKEASASQGPGKSFKVEFCETNCTENNGVWSGCTGDCICVSVGDSKEGRCMDLGDKVIDTPVAQG.

The first 28 residues, 1-28 (MASNLFTIFQLAGFVAIVFIVNLHSVSA), serve as a signal peptide directing secretion. 3 cysteine pairs are disulfide-bonded: C48/C66, C52/C68, and C62/C79. N-linked (GlcNAc...) asparagine glycosylation occurs at N51.

The protein resides in the secreted. Functionally, salivary chemokine-binding protein which binds to host chemokines CXCL1, CXCL2, CXCL3, CXCL5, CXCL6, CXCL12 and CXCL13. This Ixodes ricinus (Common tick) protein is Evasin P1104.